A 239-amino-acid chain; its full sequence is Ribosomal RNA large subunit methyltransferase E (239 aa).

Residues 1–20 (MTKAPIAGNRTGRKLGQRVK) form a disordered region. A compositionally biased stretch (basic residues) spans 11-20 (TGRKLGQRVK). S-adenosyl-L-methionine is bound by residues glycine 81, tryptophan 83, aspartate 104, aspartate 120, and aspartate 144. Catalysis depends on lysine 184, which acts as the Proton acceptor.

The protein belongs to the class I-like SAM-binding methyltransferase superfamily. RNA methyltransferase RlmE family.

It is found in the cytoplasm. The enzyme catalyses uridine(2552) in 23S rRNA + S-adenosyl-L-methionine = 2'-O-methyluridine(2552) in 23S rRNA + S-adenosyl-L-homocysteine + H(+). Functionally, specifically methylates the uridine in position 2552 of 23S rRNA at the 2'-O position of the ribose in the fully assembled 50S ribosomal subunit. This Rhizobium leguminosarum bv. trifolii (strain WSM2304) protein is Ribosomal RNA large subunit methyltransferase E.